We begin with the raw amino-acid sequence, 201 residues long: L(+)-tartrate dehydratase subunit beta (201 aa).

Histidine 37 is an active-site residue.

This sequence belongs to the class-I fumarase family. In terms of assembly, heterotetramer of two alpha and two beta subunits.

The enzyme catalyses (2R,3R)-tartrate = oxaloacetate + H2O. This chain is L(+)-tartrate dehydratase subunit beta (ttdB), found in Shigella sonnei (strain Ss046).